Here is a 424-residue protein sequence, read N- to C-terminus: Endochitinase 1 (424 aa).

A signal peptide spans 1-22 (MPSLFAQSLAIIATLQATLGLA). Positions 39-402 (YVNAVYFTNW…GTSSNKLGGP (364 aa)) constitute a GH18 domain. 3 N-linked (GlcNAc...) asparagine glycosylation sites follow: Asn-74, Asn-78, and Asn-96. Chitin is bound by residues 103–104 (GN) and 130–133 (GGWT). The Proton donor role is filled by Glu-172. Chitin is bound by residues Tyr-173 and 238–241 (MAYD). N-linked (GlcNAc...) asparagine glycosylation is found at Asn-248 and Asn-347. Trp-379 is a chitin binding site. The interval 385–412 (RQGPDSLIGTSSNKLGGPDTTENLLNYP) is disordered. Polar residues predominate over residues 392 to 408 (IGTSSNKLGGPDTTENL).

Belongs to the glycosyl hydrolase 18 family. Chitinase class V subfamily.

It is found in the secreted. The enzyme catalyses Random endo-hydrolysis of N-acetyl-beta-D-glucosaminide (1-&gt;4)-beta-linkages in chitin and chitodextrins.. In terms of biological role, secreted chitinase involved in the degradation of chitin, a component of the cell walls of fungi and exoskeletal elements of some animals (including worms and arthropods). Participates in the infection process and directly acts in the penetration process of the host cuticle. This Metarhizium robertsii (strain ARSEF 23 / ATCC MYA-3075) (Metarhizium anisopliae (strain ARSEF 23)) protein is Endochitinase 1 (chit1).